The following is a 150-amino-acid chain: MKIIARNKKALFDYSIIERFEAGIVLKGSEVVALRAGRANLKDSFVRIIKNEIFLLNSHISLLHTTHSFYKHEERGARKLLMHRKQIDKLLGKVSIEGYTIVALDLYFNTKNKVKATLALAKGKNLHDKRETLKKKQADLEARAAMKNYK.

This sequence belongs to the SmpB family.

It localises to the cytoplasm. Functionally, required for rescue of stalled ribosomes mediated by trans-translation. Binds to transfer-messenger RNA (tmRNA), required for stable association of tmRNA with ribosomes. tmRNA and SmpB together mimic tRNA shape, replacing the anticodon stem-loop with SmpB. tmRNA is encoded by the ssrA gene; the 2 termini fold to resemble tRNA(Ala) and it encodes a 'tag peptide', a short internal open reading frame. During trans-translation Ala-aminoacylated tmRNA acts like a tRNA, entering the A-site of stalled ribosomes, displacing the stalled mRNA. The ribosome then switches to translate the ORF on the tmRNA; the nascent peptide is terminated with the 'tag peptide' encoded by the tmRNA and targeted for degradation. The ribosome is freed to recommence translation, which seems to be the essential function of trans-translation. The sequence is that of SsrA-binding protein from Campylobacter jejuni subsp. jejuni serotype O:6 (strain 81116 / NCTC 11828).